A 103-amino-acid polypeptide reads, in one-letter code: Cell division protein FtsB (103 aa).

Residues 1 to 3 lie on the Cytoplasmic side of the membrane; that stretch reads MGK. Residues 4 to 21 form a helical membrane-spanning segment; it reads LTLLLLAILVWLQYSLWF. Topologically, residues 22–103 are periplasmic; it reads GKNGIHDYTR…RAQSAGQNNR (82 aa). Positions 28–71 form a coiled coil; that stretch reads DYTRVNDDVAALQATNAKLKARNDQLFAEIDDLNGGQEALEERA.

It belongs to the FtsB family. As to quaternary structure, part of a complex composed of FtsB, FtsL and FtsQ.

It localises to the cell inner membrane. Functionally, essential cell division protein. May link together the upstream cell division proteins, which are predominantly cytoplasmic, with the downstream cell division proteins, which are predominantly periplasmic. The protein is Cell division protein FtsB of Shigella flexneri serotype 5b (strain 8401).